We begin with the raw amino-acid sequence, 265 residues long: Polyphosphate glucokinase (265 aa).

Over residues 1–18 (MTSTGPETSETPGATTQR) the composition is skewed to polar residues. Residues 1-22 (MTSTGPETSETPGATTQRHGFG) are disordered. ATP is bound at residue 24–29 (DVGGSG).

The protein belongs to the ROK (NagC/XylR) family. In terms of assembly, homodimer.

The enzyme catalyses [phosphate](n) + D-glucose = [phosphate](n-1) + D-glucose 6-phosphate + H(+). It catalyses the reaction D-glucose + ATP = D-glucose 6-phosphate + ADP + H(+). In terms of biological role, catalyzes the phosphorylation of glucose using polyphosphate or ATP as the phosphoryl donor. Polyphosphate, rather than ATP, seems to be the major phosphate donor for the enzyme in M.tuberculosis. The polypeptide is Polyphosphate glucokinase (ppgK) (Mycobacterium tuberculosis (strain CDC 1551 / Oshkosh)).